Here is a 185-residue protein sequence, read N- to C-terminus: Bcl-2-modifying factor (185 aa).

The disordered stretch occupies residues 1–28; the sequence is MEPPQCVEELEDDVFQPEDGEPGTQPGS. Residues 8-21 are compositionally biased toward acidic residues; it reads EELEDDVFQPEDGE. The segment at 67–75 is interaction with DLC2; sequence DKATQTLSP. The BH3 signature appears at 134-148; the sequence is IARKLQCIADQFHRL.

The protein belongs to the Bcl-2 family. As to quaternary structure, interacts with MCL1, BCL2, BCL2L1/BCL-Xl, BCL2A1 and BCL2L2/BCL-w. Interacts with the myosin V actin motor complex through its binding to DLC2.

Functionally, may play a role in apoptosis. This is Bcl-2-modifying factor (Bmf) from Rattus norvegicus (Rat).